The sequence spans 114 residues: Putative cysteine proteinase inhibitor 9 (114 aa).

An N-terminal signal peptide occupies residues Met-1–Ala-23.

The protein belongs to the cystatin family. Phytocystatin subfamily.

The protein resides in the secreted. Functionally, specific inhibitor of cysteine proteinases. Probably involved in the regulation of endogenous processes and in defense against pests and pathogens. The chain is Putative cysteine proteinase inhibitor 9 from Oryza sativa subsp. japonica (Rice).